Reading from the N-terminus, the 466-residue chain is RUS family member 1 (466 aa).

Ala2 bears the N-acetylalanine mark. The helical transmembrane segment at Leu245–Leu265 threads the bilayer.

Belongs to the RUS1 family.

It localises to the membrane. This is RUS family member 1 from Mus musculus (Mouse).